We begin with the raw amino-acid sequence, 110 residues long: UPF0060 membrane protein BTH_I2792 (110 aa).

4 helical membrane passes run 9–29 (ALFV…WLVL), 34–54 (PVWL…LLTL), 64–84 (AAYG…VDGV), and 86–106 (LSRW…VIAL).

This sequence belongs to the UPF0060 family.

It localises to the cell inner membrane. In Burkholderia thailandensis (strain ATCC 700388 / DSM 13276 / CCUG 48851 / CIP 106301 / E264), this protein is UPF0060 membrane protein BTH_I2792.